A 352-amino-acid polypeptide reads, in one-letter code: Transcriptional regulatory protein AlgP (352 aa).

The disordered stretch occupies residues 128–352 (KALESRKAKP…SNGAAPTSAS (225 aa)). Residues 138–341 (ATKPAAKAAA…SSAASATPAA (204 aa)) show a composition bias toward low complexity.

Its function is as follows. The promoter for a critical alginate biosynthetic gene, AlgD, encoding GDP-mannose dehydrogenase, is activated only under conditions reminiscent of the cystic fibrosis lung (i.e. under high osmolarity), and at least two regulatory genes, AlgP and AlgQ, have been implicated in this activation process. The chain is Transcriptional regulatory protein AlgP (algP) from Pseudomonas aeruginosa (strain ATCC 15692 / DSM 22644 / CIP 104116 / JCM 14847 / LMG 12228 / 1C / PRS 101 / PAO1).